The following is a 579-amino-acid chain: Trehalase (579 aa).

The signal sequence occupies residues 1–15; that stretch reads MRLFLLLVGLTTVIA. N-linked (GlcNAc...) asparagine glycosylation is found at Asn29 and Asn58. Residues Arg161, 168–169, Asn205, 214–216, 279–281, and Gly313 contribute to the substrate site; these read WD, RSQ, and RPE. Asn205 is a glycosylation site (N-linked (GlcNAc...) asparagine). Asp315 functions as the Proton donor/acceptor in the catalytic mechanism. The N-linked (GlcNAc...) asparagine glycan is linked to Asn331. The active-site Proton donor/acceptor is Glu513. Residue Glu528 participates in substrate binding. Polar residues predominate over residues 560–569; the sequence is DASANNGQSN. A disordered region spans residues 560–579; it reads DASANNGQSNEESETDSKEK.

The protein belongs to the glycosyl hydrolase 37 family. In midgut and Malpighian tubules.

Its subcellular location is the basolateral cell membrane. It catalyses the reaction alpha,alpha-trehalose + H2O = alpha-D-glucose + beta-D-glucose. In terms of biological role, involved in uptake of hemolymph trehalose into epithelial cells in the midgut of feeding larvae. This Bombyx mori (Silk moth) protein is Trehalase.